Here is a 694-residue protein sequence, read N- to C-terminus: Elongation factor G (694 aa).

The tr-type G domain occupies 10–285; that stretch reads EKTRNIGIMA…GVVDYLPSPL (276 aa). Residues 19 to 26, 83 to 87, and 137 to 140 contribute to the GTP site; these read AHIDAGKT, DTPGH, and NKMD.

Belongs to the TRAFAC class translation factor GTPase superfamily. Classic translation factor GTPase family. EF-G/EF-2 subfamily.

It localises to the cytoplasm. Its function is as follows. Catalyzes the GTP-dependent ribosomal translocation step during translation elongation. During this step, the ribosome changes from the pre-translocational (PRE) to the post-translocational (POST) state as the newly formed A-site-bound peptidyl-tRNA and P-site-bound deacylated tRNA move to the P and E sites, respectively. Catalyzes the coordinated movement of the two tRNA molecules, the mRNA and conformational changes in the ribosome. The chain is Elongation factor G from Lactobacillus delbrueckii subsp. bulgaricus (strain ATCC BAA-365 / Lb-18).